The sequence spans 450 residues: Sorting nexin-4 (450 aa).

M1 is subject to N-acetylmethionine. The segment at 1–46 (MEQAPPDPERQLQPAPLEPLGSPDAVLGAAVGKETEGAGEESSGVD) is disordered. The residue at position 22 (S22) is a Phosphoserine. Positions 61–187 (SVSEAEKRTG…YLFLTQEGNW (127 aa)) constitute a PX domain. A 1,2-diacyl-sn-glycero-3-phospho-(1D-myo-inositol-3-phosphate)-binding residues include R106, S108, K132, and R154.

Belongs to the sorting nexin family. Heterodimer; heterodimerizes with SNX7 or SNX30. Interacts with WWC1/KIBRA. Identified in a complex with WWC1/KIBRA and dynein components DYNLL1 and DYNC1I2. Interacts with BIN1.

Its subcellular location is the early endosome. It localises to the early endosome membrane. Involved in the regulation of endocytosis and in several stages of intracellular trafficking. Plays a role in recycling endocytosed transferrin receptor and prevent its degradation. Involved in autophagosome assembly by regulating trafficking and recycling of phospholipid scramblase ATG9A. This Pongo abelii (Sumatran orangutan) protein is Sorting nexin-4.